The following is a 414-amino-acid chain: tRNA(Ile)-lysidine synthase (414 aa).

13 to 18 (SGGIDS) is a binding site for ATP.

It belongs to the tRNA(Ile)-lysidine synthase family.

The protein resides in the cytoplasm. It catalyses the reaction cytidine(34) in tRNA(Ile2) + L-lysine + ATP = lysidine(34) in tRNA(Ile2) + AMP + diphosphate + H(+). In terms of biological role, ligates lysine onto the cytidine present at position 34 of the AUA codon-specific tRNA(Ile) that contains the anticodon CAU, in an ATP-dependent manner. Cytidine is converted to lysidine, thus changing the amino acid specificity of the tRNA from methionine to isoleucine. This is tRNA(Ile)-lysidine synthase from Thermotoga sp. (strain RQ2).